The chain runs to 155 residues: Protein-export protein SecB (155 aa).

This sequence belongs to the SecB family. As to quaternary structure, homotetramer, a dimer of dimers. One homotetramer interacts with 1 SecA dimer.

It is found in the cytoplasm. Functionally, one of the proteins required for the normal export of preproteins out of the cell cytoplasm. It is a molecular chaperone that binds to a subset of precursor proteins, maintaining them in a translocation-competent state. It also specifically binds to its receptor SecA. In Cronobacter sakazakii (strain ATCC BAA-894) (Enterobacter sakazakii), this protein is Protein-export protein SecB.